We begin with the raw amino-acid sequence, 121 residues long: Basic phospholipase A2 homolog piratoxin-2 (121 aa).

7 cysteine pairs are disulfide-bonded: Cys26–Cys115, Cys28–Cys44, Cys43–Cys95, Cys49–Cys121, Cys50–Cys88, Cys57–Cys81, and Cys75–Cys86. The tract at residues 105 to 117 (KKYRYHLKPFCKK) is important for membrane-damaging activities in eukaryotes and bacteria; heparin-binding.

Belongs to the phospholipase A2 family. Group II subfamily. K49 sub-subfamily. Homodimer; non-covalently linked. In terms of tissue distribution, expressed by the venom gland.

It is found in the secreted. Snake venom phospholipase A2 (PLA2) homolog that lacks enzymatic activity. Shows myotoxic activity and edema-inducing activities in vivo. A model of myotoxic mechanism has been proposed: an apo Lys49-PLA2 is activated by the entrance of a hydrophobic molecule (e.g. fatty acid) at the hydrophobic channel of the protein leading to a reorientation of a monomer. This reorientation causes a transition between 'inactive' to 'active' states, causing alignment of C-terminal and membrane-docking sites (MDoS) side-by-side and putting the membrane-disruption sites (MDiS) in the same plane, exposed to solvent and in a symmetric position for both monomers. The MDoS region stabilizes the toxin on membrane by the interaction of charged residues with phospholipid head groups. Subsequently, the MDiS region destabilizes the membrane with penetration of hydrophobic residues. This insertion causes a disorganization of the membrane, allowing an uncontrolled influx of ions (i.e. calcium and sodium), and eventually triggering irreversible intracellular alterations and cell death. The sequence is that of Basic phospholipase A2 homolog piratoxin-2 from Bothrops pirajai (Piraja's lancehead).